The following is a 275-amino-acid chain: Large ribosomal subunit protein uL2 (275 aa).

Positions 236-263 (EGRGKGQHPVTPWGMPTKGYKTRRGRRA) are disordered.

The protein belongs to the universal ribosomal protein uL2 family. Part of the 50S ribosomal subunit. Forms a bridge to the 30S subunit in the 70S ribosome.

Functionally, one of the primary rRNA binding proteins. Required for association of the 30S and 50S subunits to form the 70S ribosome, for tRNA binding and peptide bond formation. It has been suggested to have peptidyltransferase activity; this is somewhat controversial. Makes several contacts with the 16S rRNA in the 70S ribosome. The protein is Large ribosomal subunit protein uL2 of Pseudothermotoga lettingae (strain ATCC BAA-301 / DSM 14385 / NBRC 107922 / TMO) (Thermotoga lettingae).